Consider the following 607-residue polypeptide: Cytosolic Fe-S cluster assembly factor NAR1 (607 aa).

The [4Fe-4S] cluster site is built by Cys20, Cys82, Cys85, Cys88, Cys204, and Cys259. A disordered region spans residues 430–476; sequence KPNTGKSTNTTTTTTKSKVNPLAARRRARIANNRGKPETKSTSEVNS. Residues 432–447 show a composition bias toward low complexity; sequence NTGKSTNTTTTTTKSK. Cys496 and Cys500 together coordinate [4Fe-4S] cluster.

The protein belongs to the NARF family.

Its function is as follows. Component of the cytosolic Fe/S protein assembly machinery. Required for maturation of extramitochondrial Fe/S proteins. May play a role in the transfer of pre-assembled Fe/S clusters to target apoproteins. The chain is Cytosolic Fe-S cluster assembly factor NAR1 (NAR1) from Candida albicans (strain SC5314 / ATCC MYA-2876) (Yeast).